The sequence spans 261 residues: Ice-binding protein (261 aa).

Positions 1–20 (MSLLSIITIGLAGLGGLVNG) are cleaved as a signal peptide. N-linked (GlcNAc...) asparagine glycosylation occurs at asparagine 185.

Belongs to the ice-binding protein family. As to quaternary structure, homodimer. Dimerization is not required for the thermal hysteresis (TH) activity. Post-translationally, glycosylated. Glycosylation is not required for the thermal hysteresis (TH) activity. Glycosylation may increase stability and secretion of this protein.

Its subcellular location is the secreted. Functionally, confers freeze tolerance. Binds to the surface of ice crystals and inhibits their growth. Has low thermal hysteresis (TH) activity, which is the ability to lower the freezing point of an aqueous solution below its melting point. The TH activity of this protein is approximately 0.2 degrees Celsius at 50 uM and 0.3 degrees Celsius at 400 uM. This is Ice-binding protein from Leucosporidium sp. (strain AY30) (Arctic yeast).